Here is a 169-residue protein sequence, read N- to C-terminus: MTRKSRRLILIAACGAVLALALGLILSAMSGSIVFFRSPAEVASQGVPPGTRFRLGGLVKDGSVKRGPDQNVEFSVTDTNATVPVQYRGLLPDLFREGQGIVAEGTLDAGGVFRADTVLAKHDENYMPREVADALKAQGRWQEGGGKEAPKDAAKPASADATLGQRSER.

Residues 1–7 (MTRKSRR) lie on the Cytoplasmic side of the membrane. Residues 8 to 28 (LILIAACGAVLALALGLILSA) traverse the membrane as a helical; Signal-anchor for type II membrane protein segment. At 29-169 (MSGSIVFFRS…DATLGQRSER (141 aa)) the chain is on the periplasmic side. His122 and Tyr126 together coordinate heme. The tract at residues 135–169 (LKAQGRWQEGGGKEAPKDAAKPASADATLGQRSER) is disordered. Residues 145 to 154 (GGKEAPKDAA) are compositionally biased toward basic and acidic residues.

Belongs to the CcmE/CycJ family.

Its subcellular location is the cell inner membrane. Its function is as follows. Heme chaperone required for the biogenesis of c-type cytochromes. Transiently binds heme delivered by CcmC and transfers the heme to apo-cytochromes in a process facilitated by CcmF and CcmH. The protein is Cytochrome c-type biogenesis protein CcmE of Methylorubrum populi (strain ATCC BAA-705 / NCIMB 13946 / BJ001) (Methylobacterium populi).